The chain runs to 210 residues: MNYAEYFTNRSTDEITRDLIGRPLTFNDGQEKLGGYIVEAEAYMGKLDRAAHSYGGHRSPANEGLYRTGGTIYIYAQRQYFFFDVACQEENEPQGVLVRAIDPAWGIDSMIKNRNGKSGVLITNGPAKMMQAFGIHDKNWNLHFLSDSPFTIDLADNHKRIAQEIIADKRVGINQSDPIWANKKLRYYVAGNPYVSDMKKRDYASNNGWT.

The protein belongs to the DNA glycosylase MPG family.

The polypeptide is Putative 3-methyladenine DNA glycosylase (Lactobacillus acidophilus (strain ATCC 700396 / NCK56 / N2 / NCFM)).